A 680-amino-acid chain; its full sequence is Penicillin-binding protein 2B (680 aa).

Topologically, residues Met-1 to Ser-8 are cytoplasmic. A helical transmembrane segment spans residues Ile-9 to Gly-29. Residues Arg-30–Asn-680 are Extracellular-facing. Catalysis depends on Ser-386, which acts as the Acyl-ester intermediate.

It belongs to the transpeptidase family. Interacts with MreC in the elongasome.

It localises to the cell membrane. In terms of biological role, a transpeptidase that forms peptide cross-links between adjacent glycan strands in cell wall peptidoglycan (PG). Part of the elongasome machinery that synthesizes peripheral PG. This chain is Penicillin-binding protein 2B, found in Streptococcus pneumoniae serotype 2 (strain D39 / NCTC 7466).